The following is a 755-amino-acid chain: Protein phosphatase 1E (755 aa).

Residues 21–131 (EFRGPCGGGE…PPLPPLPRPL (111 aa)) form a disordered region. A run of 7 repeats spans residues 31 to 32 (PE), 33 to 34 (PE), 35 to 36 (PE), 37 to 38 (PE), 39 to 40 (PE), 41 to 42 (PE), and 43 to 44 (PE). The 11 X 2 AA tandem repeats of P-E stretch occupies residues 31-52 (PEPEPEPEPEPEPESEPEPEPE). Composition is skewed to acidic residues over residues 31-68 (PEPE…EPGE) and 77-101 (EEGD…EEEG). An 8; approximate repeat occupies 45–46 (SE). 3 consecutive repeat copies span residues 47 to 48 (PE), 49 to 50 (PE), and 51 to 52 (PE). Over residues 102–113 (AATAAAAPGHSA) the composition is skewed to low complexity. Positions 114–129 (VPPPPPQLPPLPPLPR) are enriched in pro residues. Positions 231-488 (ETSIHAIKNM…DNITVIVVFL (258 aa)) constitute a PPM-type phosphatase domain. Mn(2+) contacts are provided by Asp-273, Gly-274, Asp-435, and Asp-479. A disordered region spans residues 498 to 537 (SEESDWTENSFQGGQEDGGDDKENHGECKRPWPQHQCSAP). Over residues 518–527 (DKENHGECKR) the composition is skewed to basic and acidic residues. A phosphoserine mark is found at Ser-535 and Ser-548.

The protein belongs to the PP2C family. In terms of assembly, heterotrimer. Interacts with PAX1 and ARHGEF6 (or ARHGEF7). It depends on Mg(2+) as a cofactor. The cofactor is Mn(2+).

It is found in the nucleus. It localises to the cytoplasm. It catalyses the reaction O-phospho-L-seryl-[protein] + H2O = L-seryl-[protein] + phosphate. The enzyme catalyses O-phospho-L-threonyl-[protein] + H2O = L-threonyl-[protein] + phosphate. Its function is as follows. Protein phosphatase that inactivates multifunctional CaM kinases such as CAMK4 and CAMK2. Dephosphorylates and inactivates PAK. May play a role in the inhibition of actin fiber stress breakdown and in morphological changes driven by TNK2/CDC42. Dephosphorylates PRKAA2. The chain is Protein phosphatase 1E (PPM1E) from Homo sapiens (Human).